The sequence spans 641 residues: Serine/threonine-protein kinase pink-1, mitochondrial (641 aa).

The N-terminal 74 residues, 1–74, are a transit peptide targeting the mitochondrion; it reads MSMKRFGKAA…TRHGRVFRPF (74 aa). The Protein kinase domain occupies 137-483; it reads YEFGEFLGQG…AANALNLSLF (347 aa). ATP is bound by residues 143-151 and Lys199; that span reads LGQGCNAAV. Catalysis depends on Asp338, which acts as the Proton acceptor.

It belongs to the protein kinase superfamily. Ser/Thr protein kinase family. Mg(2+) serves as cofactor. In terms of processing, autophosphorylated.

The protein resides in the mitochondrion. The enzyme catalyses L-seryl-[protein] + ATP = O-phospho-L-seryl-[protein] + ADP + H(+). It carries out the reaction L-threonyl-[protein] + ATP = O-phospho-L-threonyl-[protein] + ADP + H(+). In terms of biological role, protects against mitochondrial dysfunction during cellular stress, potentially by phosphorylating mitochondrial proteins. Plays a role in mitophagy. The polypeptide is Serine/threonine-protein kinase pink-1, mitochondrial (pink-1) (Caenorhabditis elegans).